The primary structure comprises 257 residues: 2,3,4,5-tetrahydropyridine-2,6-dicarboxylate N-acetyltransferase (257 aa).

Belongs to the transferase hexapeptide repeat family. DapH subfamily.

It catalyses the reaction (S)-2,3,4,5-tetrahydrodipicolinate + acetyl-CoA + H2O = L-2-acetamido-6-oxoheptanedioate + CoA. It participates in amino-acid biosynthesis; L-lysine biosynthesis via DAP pathway; LL-2,6-diaminopimelate from (S)-tetrahydrodipicolinate (acetylase route): step 1/3. In terms of biological role, catalyzes the transfer of an acetyl group from acetyl-CoA to tetrahydrodipicolinate. This Lactococcus lactis subsp. cremoris (strain SK11) protein is 2,3,4,5-tetrahydropyridine-2,6-dicarboxylate N-acetyltransferase.